Consider the following 408-residue polypeptide: Leucine aminopeptidase 1 (408 aa).

The N-terminal stretch at 1-16 (MKVSSAIALLLPVVAA) is a signal peptide. The propeptide occupies 17 to 89 (RFVDSAFEQD…SAQSATTGPA (73 aa)). 3 N-linked (GlcNAc...) asparagine glycosylation sites follow: Asn95, Asn108, and Asn182. The Zn(2+) site is built by His190, Asp209, Glu248, and Asp275. A disulfide bridge links Cys324 with Cys328. His357 contacts Zn(2+).

The protein belongs to the peptidase M28 family. M28E subfamily. Monomer. Zn(2+) serves as cofactor.

Its subcellular location is the secreted. Its function is as follows. Extracellular aminopeptidase that allows assimilation of proteinaceous substrates. The protein is Leucine aminopeptidase 1 (LAP1) of Grosmannia clavigera (strain kw1407 / UAMH 11150) (Blue stain fungus).